The sequence spans 89 residues: OMEGA-ectatommitoxin(02)-Rm1b (89 aa).

The first 30 residues, methionine 1–glycine 30, serve as a signal peptide directing secretion. Cystine bridges form between cysteine 39–cysteine 52, cysteine 47–cysteine 68, and cysteine 70–cysteine 79. Residues tyrosine 43–glycine 80 enclose the EGF-like domain.

The protein belongs to the EGF domain peptide family. As to expression, expressed by the venom gland.

It localises to the secreted. Functionally, ant peptide with probable defensive activity which acts as a potent agonist of the mammalian epidermal growth factor receptor (EGFR). Mimics, both structurally and functionally, vertebrate epidermal growth factor (EGF) peptide hormones. In vivo, intraplantar injection in mice causes long-lasting (several days) hypersensitivity of the injected paw to both mechanical and thermal stimuli. Its long-lasting effect is unusual for venom toxins whose effects are usually immediate. One possible explanation is that it would reduce the duration of a nest attack, discourage future attacks, or enhance the actions of subsequent exposure to other pain-inducing venom peptides. The sequence is that of OMEGA-ectatommitoxin(02)-Rm1b from Rhytidoponera metallica (Australian green-headed ant).